Here is a 285-residue protein sequence, read N- to C-terminus: Iodotyrosine deiodinase 1 (285 aa).

The chain crosses the membrane as a helical span at residues 1–21; that stretch reads MFLLTPVLVAVVCILVIWVFK. Residues 96 to 100 and 124 to 125 contribute to the FMN site; these read RRSIR and SG. The 3,5-diiodo-L-tyrosine site is built by Ala-126, Glu-153, Tyr-157, and Lys-178. 3-iodo-L-tyrosine-binding residues include Ala-126, Glu-153, Tyr-157, and Lys-178. FMN contacts are provided by residues 233–235 and Arg-275; that span reads TTT.

The protein belongs to the nitroreductase family. Homodimer. FMN is required as a cofactor.

It localises to the cell membrane. The protein resides in the cytoplasmic vesicle membrane. It catalyses the reaction 2 iodide + L-tyrosine + 2 NADP(+) = 3,5-diiodo-L-tyrosine + 2 NADPH + H(+). The catalysed reaction is iodide + L-tyrosine + NADP(+) = 3-iodo-L-tyrosine + NADPH. The enzyme catalyses 3-iodo-L-tyrosine + iodide + NADP(+) = 3,5-diiodo-L-tyrosine + NADPH + H(+). It carries out the reaction L-tyrosine + chloride + NADP(+) = 3-chloro-L-tyrosine + NADPH. It catalyses the reaction bromide + L-tyrosine + NADP(+) = 3-bromo-L-tyrosine + NADPH. Functionally, catalyzes the dehalogenation of halotyrosines such as 3-bromo-L-tyrosine, 3-chloro-L-tyrosine, 3-iodo-L-tyrosine and 3,5-diiodo-L-tyrosine. During thyroid hormone biosynthesis, facilitates iodide salvage by catalysing the oxidative NADPH-dependent deiodination of the halogenated by-products of thyroid hormone production, monoiodotyrosine (L-MIT) and diiodotyrosine (L-DIT). The scavanged iodide can then reenter the hormone-producing pathways. Acts more efficiently on 3-iodo-L-tyrosine than 3,5-diiodo-L-tyrosine. This Rattus norvegicus (Rat) protein is Iodotyrosine deiodinase 1 (Iyd).